The sequence spans 396 residues: Probable sugar efflux transporter (396 aa).

12 helical membrane passes run Val-15 to Leu-35, Val-50 to Leu-70, Leu-81 to Phe-101, Val-103 to Ala-123, Ala-136 to Leu-156, Phe-170 to Leu-190, Pro-209 to Tyr-229, Phe-246 to Gly-266, Ala-275 to Ala-295, Ile-299 to Met-319, Val-333 to Gly-353, and Met-364 to Phe-384.

Belongs to the major facilitator superfamily. SotB (TC 2.A.1.2) family.

It localises to the cell inner membrane. Its function is as follows. Involved in the efflux of sugars. The physiological role may be the reduction of the intracellular concentration of toxic sugars or sugar metabolites. This is Probable sugar efflux transporter from Shigella boydii serotype 18 (strain CDC 3083-94 / BS512).